A 78-amino-acid chain; its full sequence is ATP synthase subunit c (78 aa).

2 helical membrane-spanning segments follow: residues Leu16 to Leu36 and Met57 to Val77.

It belongs to the ATPase C chain family. In terms of assembly, F-type ATPases have 2 components, F(1) - the catalytic core - and F(0) - the membrane proton channel. F(1) has five subunits: alpha(3), beta(3), gamma(1), delta(1), epsilon(1). F(0) has three main subunits: a(1), b(2) and c(10-14). The alpha and beta chains form an alternating ring which encloses part of the gamma chain. F(1) is attached to F(0) by a central stalk formed by the gamma and epsilon chains, while a peripheral stalk is formed by the delta and b chains.

The protein resides in the cell inner membrane. Its function is as follows. F(1)F(0) ATP synthase produces ATP from ADP in the presence of a proton or sodium gradient. F-type ATPases consist of two structural domains, F(1) containing the extramembraneous catalytic core and F(0) containing the membrane proton channel, linked together by a central stalk and a peripheral stalk. During catalysis, ATP synthesis in the catalytic domain of F(1) is coupled via a rotary mechanism of the central stalk subunits to proton translocation. Functionally, key component of the F(0) channel; it plays a direct role in translocation across the membrane. A homomeric c-ring of between 10-14 subunits forms the central stalk rotor element with the F(1) delta and epsilon subunits. This chain is ATP synthase subunit c, found in Hyphomonas neptunium (strain ATCC 15444).